A 141-amino-acid chain; its full sequence is Protein nfe1 (141 aa).

The protein to the N-terminal of nitrogenase iron protein (NifH). Has lost the ATP-binding site.

Functionally, responsible for the nodulation efficiency and competitive ability of strain GR4 on alfalfa roots. The chain is Protein nfe1 (nfe1) from Rhizobium meliloti (Ensifer meliloti).